Here is a 762-residue protein sequence, read N- to C-terminus: Polyadenylate-binding protein, cytoplasmic and nuclear (762 aa).

The segment at 39-58 (TGEEIDTAGPTPSSAAPHPQ) is disordered. The span at 48 to 58 (PTPSSAAPHPQ) shows a compositional bias: low complexity. RRM domains are found at residues 61-139 (ASLY…WSQR), 149-226 (GNVF…HHIP), 242-320 (TNIY…RAQK), and 346-470 (VNLY…LAQR). Disordered regions lie at residues 376-429 (KVMR…KSKL), 596-663 (SALA…AGAP), and 740-762 (VRQQGDGEGAQAPSKEEKTEEKA). Basic and acidic residues predominate over residues 389 to 425 (GESKEGEESEKNKENKPEEKEGDDSKPEEKEGEDSKS). Residues 600 to 612 (GGRGGPAGRGPMQ) are compositionally biased toward gly residues. Residues 645–663 (AAGRAPAGAPAGARGAGAP) are compositionally biased toward low complexity. The PABC domain maps to 664-741 (EGLQGQLAAV…ALAVYDDYVR (78 aa)). Over residues 753–762 (SKEEKTEEKA) the composition is skewed to basic and acidic residues.

Belongs to the polyadenylate-binding protein type-1 family.

The protein localises to the cytoplasm. It is found in the nucleus. Binds the poly(A) tail of mRNA. Appears to be an important mediator of the multiple roles of the poly(A) tail in mRNA biogenesis, stability and translation. In the nucleus, involved in both mRNA cleavage and polyadenylation. Is also required for efficient mRNA export to the cytoplasm. Acts in concert with a poly(A)-specific nuclease (PAN) to affect poly(A) tail shortening, which may occur concomitantly with either nucleocytoplasmic mRNA transport or translational initiation. In the cytoplasm, stimulates translation initiation and regulates mRNA decay through translation termination-coupled poly(A) shortening, probably mediated by PAN. This is Polyadenylate-binding protein, cytoplasmic and nuclear (PAB1) from Pyricularia oryzae (strain 70-15 / ATCC MYA-4617 / FGSC 8958) (Rice blast fungus).